The primary structure comprises 125 residues: Fluoride-specific ion channel FluC (125 aa).

Transmembrane regions (helical) follow at residues 4–24 (ILLV…VGLW), 32–52 (AFPW…GFLA), 68–88 (FLIT…LDAI), and 100–120 (LAYI…GLAL). Na(+) contacts are provided by Gly-75 and Thr-78.

Belongs to the fluoride channel Fluc/FEX (TC 1.A.43) family.

The protein resides in the cell inner membrane. The catalysed reaction is fluoride(in) = fluoride(out). Its activity is regulated as follows. Na(+) is not transported, but it plays an essential structural role and its presence is essential for fluoride channel function. Its function is as follows. Fluoride-specific ion channel. Important for reducing fluoride concentration in the cell, thus reducing its toxicity. In Rhizobium meliloti (strain 1021) (Ensifer meliloti), this protein is Fluoride-specific ion channel FluC.